The primary structure comprises 516 residues: Tyrosine decarboxylase 3 (516 aa).

Lys319 bears the N6-(pyridoxal phosphate)lysine mark.

Belongs to the group II decarboxylase family. In terms of assembly, homodimer. Pyridoxal 5'-phosphate serves as cofactor.

It carries out the reaction L-tyrosine + H(+) = tyramine + CO2. The sequence is that of Tyrosine decarboxylase 3 (TYRDC-3) from Petroselinum crispum (Parsley).